Consider the following 341-residue polypeptide: UDP-3-O-(3-hydroxymyristoyl)glucosamine N-acyltransferase (341 aa).

His239 functions as the Proton acceptor in the catalytic mechanism.

Belongs to the transferase hexapeptide repeat family. LpxD subfamily. In terms of assembly, homotrimer.

It carries out the reaction a UDP-3-O-[(3R)-3-hydroxyacyl]-alpha-D-glucosamine + a (3R)-hydroxyacyl-[ACP] = a UDP-2-N,3-O-bis[(3R)-3-hydroxyacyl]-alpha-D-glucosamine + holo-[ACP] + H(+). The enzyme catalyses UDP-3-O-[(3R)-3-hydroxytetradecanoyl]-alpha-D-glucosamine + (3R)-hydroxytetradecanoyl-[ACP] = UDP-2-N,3-O-bis[(3R)-3-hydroxytetradecanoyl]-alpha-D-glucosamine + holo-[ACP] + H(+). Its pathway is glycolipid biosynthesis; lipid IV(A) biosynthesis; lipid IV(A) from (3R)-3-hydroxytetradecanoyl-[acyl-carrier-protein] and UDP-N-acetyl-alpha-D-glucosamine: step 3/6. Its function is as follows. Catalyzes the N-acylation of UDP-3-O-(hydroxytetradecanoyl)glucosamine using 3-hydroxytetradecanoyl-ACP as the acyl donor. Is involved in the biosynthesis of lipid A, a phosphorylated glycolipid that anchors the lipopolysaccharide to the outer membrane of the cell. The polypeptide is UDP-3-O-(3-hydroxymyristoyl)glucosamine N-acyltransferase (Escherichia coli (strain UTI89 / UPEC)).